Reading from the N-terminus, the 612-residue chain is Dihydroxy-acid dehydratase (612 aa).

Asp81 contacts Mg(2+). Cys122 serves as a coordination point for [2Fe-2S] cluster. Asp123 and Lys124 together coordinate Mg(2+). Lys124 is subject to N6-carboxylysine. Position 193 (Cys193) interacts with [2Fe-2S] cluster. Glu489 lines the Mg(2+) pocket. The Proton acceptor role is filled by Ser515.

This sequence belongs to the IlvD/Edd family. As to quaternary structure, homodimer. The cofactor is [2Fe-2S] cluster. It depends on Mg(2+) as a cofactor.

It catalyses the reaction (2R)-2,3-dihydroxy-3-methylbutanoate = 3-methyl-2-oxobutanoate + H2O. The catalysed reaction is (2R,3R)-2,3-dihydroxy-3-methylpentanoate = (S)-3-methyl-2-oxopentanoate + H2O. Its pathway is amino-acid biosynthesis; L-isoleucine biosynthesis; L-isoleucine from 2-oxobutanoate: step 3/4. The protein operates within amino-acid biosynthesis; L-valine biosynthesis; L-valine from pyruvate: step 3/4. Functions in the biosynthesis of branched-chain amino acids. Catalyzes the dehydration of (2R,3R)-2,3-dihydroxy-3-methylpentanoate (2,3-dihydroxy-3-methylvalerate) into 2-oxo-3-methylpentanoate (2-oxo-3-methylvalerate) and of (2R)-2,3-dihydroxy-3-methylbutanoate (2,3-dihydroxyisovalerate) into 2-oxo-3-methylbutanoate (2-oxoisovalerate), the penultimate precursor to L-isoleucine and L-valine, respectively. The polypeptide is Dihydroxy-acid dehydratase (Xanthomonas campestris pv. campestris (strain 8004)).